The chain runs to 227 residues: MNIKNFLNNRLWKNNSSLVQLLGLCPVLAMTTNAINAIGLGMTTTLVLTITNTIISSFRKIIPKDLRIPIYMMIISSVVTSIEMLLHAYTFNLYQSLGIFIPLIVTNCIIVGRADLIAYKSSIVESFFDGIFIGLGSMFAMFAVGSIREILGNGTLFFGANKIISNIHSSVFFTLLDKKFTIILAVFPPGGFLILGFLIAIKNFIDLYYKKNTIKNIEQCSCSNKIK.

5 helical membrane-spanning segments follow: residues 34–56 (AINAIGLGMTTTLVLTITNTIIS), 68–88 (IPIYMMIISSVVTSIEMLLHA), 91–111 (FNLYQSLGIFIPLIVTNCIIV), 127–147 (FFDGIFIGLGSMFAMFAVGSI), and 181–201 (TIILAVFPPGGFLILGFLIAI).

Belongs to the NqrDE/RnfAE family. In terms of assembly, the complex is composed of six subunits: RnfA, RnfB, RnfC, RnfD, RnfE and RnfG.

The protein resides in the cell inner membrane. Part of a membrane-bound complex that couples electron transfer with translocation of ions across the membrane. The protein is Ion-translocating oxidoreductase complex subunit E of Buchnera aphidicola subsp. Acyrthosiphon pisum (strain 5A).